Here is a 196-residue protein sequence, read N- to C-terminus: Endoribonuclease YbeY (196 aa).

Residues H120, H124, and H130 each coordinate Zn(2+).

The protein belongs to the endoribonuclease YbeY family. Zn(2+) serves as cofactor.

The protein resides in the cytoplasm. Functionally, single strand-specific metallo-endoribonuclease involved in late-stage 70S ribosome quality control and in maturation of the 3' terminus of the 16S rRNA. This Corynebacterium glutamicum (strain R) protein is Endoribonuclease YbeY.